The primary structure comprises 270 residues: Glutamate racemase (270 aa).

Substrate-binding positions include 10 to 11 (DS) and 42 to 43 (YG). The Proton donor/acceptor role is filled by cysteine 73. Residue 74–75 (NT) coordinates substrate. Cysteine 184 functions as the Proton donor/acceptor in the catalytic mechanism. Substrate is bound at residue 185 to 186 (TH).

It belongs to the aspartate/glutamate racemases family.

It catalyses the reaction L-glutamate = D-glutamate. It functions in the pathway cell wall biogenesis; peptidoglycan biosynthesis. Its function is as follows. Provides the (R)-glutamate required for cell wall biosynthesis. The sequence is that of Glutamate racemase from Geobacter metallireducens (strain ATCC 53774 / DSM 7210 / GS-15).